A 210-amino-acid chain; its full sequence is Orotate phosphoribosyltransferase (210 aa).

5-phospho-alpha-D-ribose 1-diphosphate-binding positions include arginine 94, lysine 98, histidine 100, and 120-128; that span reads EDLISTGGS. Orotate is bound at residue serine 124.

It belongs to the purine/pyrimidine phosphoribosyltransferase family. PyrE subfamily. Homodimer. It depends on Mg(2+) as a cofactor.

It carries out the reaction orotidine 5'-phosphate + diphosphate = orotate + 5-phospho-alpha-D-ribose 1-diphosphate. The protein operates within pyrimidine metabolism; UMP biosynthesis via de novo pathway; UMP from orotate: step 1/2. Its function is as follows. Catalyzes the transfer of a ribosyl phosphate group from 5-phosphoribose 1-diphosphate to orotate, leading to the formation of orotidine monophosphate (OMP). The polypeptide is Orotate phosphoribosyltransferase (Bacillus cereus (strain ATCC 10987 / NRS 248)).